The following is a 357-amino-acid chain: MEKGMNVLHDFGIQSTHYLQVNYQNSQDWFILVSVIADLRNAFYVLFPIWFHLREAVGIKLLWVAVIGDWLNLVFKWILFGQRPYWWVLDTDYYSNTSAPLIKQFPVTCETGPGSPSGHAMGTAGVYYVMVTSTLSIFRGKKKPTYRFRCLNVMLWLGFWVVQLNVCLSRIYLAAHFPHQVVAGVLSGIAVAETFRHIQSIYNASLKKYFLITCFLFSFAIGFYLLLKWLGVDLLWTLEKAKRRCERPEWVHIDTTPFASLLKNLGTLFGLGLALNSSMYRESCKGKLSKWFPFRLSCIVASLVLLHLFDSLKPPSQIELIFYVLSFCKSAAVPLASVSLIPYCLAWVLGQPNKKTV.

Topologically, residues 1-28 are lumenal; sequence MEKGMNVLHDFGIQSTHYLQVNYQNSQD. A helical membrane pass occupies residues 29-49; sequence WFILVSVIADLRNAFYVLFPI. Over 50–60 the chain is Cytoplasmic; it reads WFHLREAVGIK. The chain crosses the membrane as a helical span at residues 61–81; that stretch reads LLWVAVIGDWLNLVFKWILFG. The Lumenal segment spans residues 82-117; sequence QRPYWWVLDTDYYSNTSAPLIKQFPVTCETGPGSPS. A substrate-binding site is contributed by arginine 83. Residue asparagine 96 is glycosylated (N-linked (GlcNAc...) asparagine). Residues 118–138 form a helical membrane-spanning segment; that stretch reads GHAMGTAGVYYVMVTSTLSIF. Histidine 119 functions as the Proton donor in the catalytic mechanism. Over 139-147 the chain is Cytoplasmic; sequence RGKKKPTYR. The helical transmembrane segment at 148–168 threads the bilayer; sequence FRCLNVMLWLGFWVVQLNVCL. The Lumenal segment spans residues 169–170; the sequence is SR. Arginine 170 contacts substrate. The chain crosses the membrane as a helical span at residues 171-191; it reads IYLAAHFPHQVVAGVLSGIAV. Residue histidine 176 is the Nucleophile of the active site. Residues 192–209 lie on the Cytoplasmic side of the membrane; it reads AETFRHIQSIYNASLKKY. A helical membrane pass occupies residues 210–230; it reads FLITCFLFSFAIGFYLLLKWL. The Lumenal portion of the chain corresponds to 231–254; it reads GVDLLWTLEKAKRRCERPEWVHID. Residues 255-275 form a helical membrane-spanning segment; it reads TTPFASLLKNLGTLFGLGLAL. Topologically, residues 276-291 are cytoplasmic; it reads NSSMYRESCKGKLSKW. Residues 292–312 traverse the membrane as a helical segment; sequence FPFRLSCIVASLVLLHLFDSL. Over 313–320 the chain is Lumenal; it reads KPPSQIEL. A helical transmembrane segment spans residues 321-341; sequence IFYVLSFCKSAAVPLASVSLI. Residues 342-357 lie on the Cytoplasmic side of the membrane; it reads PYCLAWVLGQPNKKTV. Positions 354 to 357 match the Prevents secretion from ER motif; the sequence is KKTV.

The protein belongs to the glucose-6-phosphatase family.

The protein resides in the endoplasmic reticulum membrane. It carries out the reaction D-glucose 6-phosphate + H2O = D-glucose + phosphate. It functions in the pathway carbohydrate biosynthesis; gluconeogenesis. Its function is as follows. Hydrolyzes glucose-6-phosphate to glucose in the endoplasmic reticulum. Forms with the glucose-6-phosphate transporter (SLC37A4/G6PT) the complex responsible for glucose production in the terminal step of glycogenolysis and gluconeogenesis. Hence, it is the key enzyme in homeostatic regulation of blood glucose levels. The protein is Glucose-6-phosphatase catalytic subunit 1 (G6PC1) of Bos taurus (Bovine).